Reading from the N-terminus, the 274-residue chain is Transcription factor Ovo-like 2 (274 aa).

Over residues 1–11 (MPKVFLVKRRS) the composition is skewed to basic residues. The interval 1-88 (MPKVFLVKRR…ETPELHDAQG (88 aa)) is disordered. The span at 18-29 (SWDELPDDKRAD) shows a compositional bias: basic and acidic residues. Low complexity predominate over residues 50-74 (DGGSSSGCSSSAGEPGGAESSSSPR). 4 C2H2-type zinc fingers span residues 118-140 (HNCD…LKCH), 146-168 (HLCT…VRTH), 174-197 (YKCE…KKIH), and 213-236 (YVCE…NSDH). A Phosphoserine modification is found at Ser-268.

This sequence belongs to the krueppel C2H2-type zinc-finger protein family. As to quaternary structure, interacts (via zinc-finger domains) with CEBPA (via bZIP domain); the interaction inhibits the transcription factor activity of CEBPA and is required to repress adipogenesis. In terms of tissue distribution, expressed highly in testis, specifically in spermatocytes. Expressed also in skin and at lower levels in the ovary. Expressed in adipose tissues. Expression is lower than in testis and a relatively higher expression level is detected in the stromal vascular fraction (SVF) than in fat cells themselves.

It localises to the nucleus. In terms of biological role, zinc-finger transcription repressor factor. Plays a critical role in maintaining the identity of epithelial lineages by suppressing epithelial-to mesenchymal transition (EMT) mainly through the repression of ZEB1, an EMT inducer. Positively regulates neuronal differentiation. Suppresses cell cycling and terminal differentiation of keratinocytes by directly repressing MYC and NOTCH1. Important for the correct development of primordial germ cells in embryos. Plays dual functions in thermogenesis and adipogenesis to maintain energy balance. Essential for brown/beige adipose tissue-mediated thermogenesis, is necessary for the development of brown adipocytes. In white adipose tissues, limits adipogenesis by blocking CEBPA binding to its transcriptional targets and inhibiting its transcription factor activity. The protein is Transcription factor Ovo-like 2 of Mus musculus (Mouse).